The chain runs to 503 residues: Discoidin, CUB and LCCL domain-containing protein 1 (503 aa).

Positions Met-1 to Ala-25 are cleaved as a signal peptide. The Extracellular portion of the chain corresponds to Glu-26 to Thr-250. Intrachain disulfides connect Cys-32-Cys-59, Cys-85-Cys-103, Cys-149-Cys-165, and Cys-169-Cys-191. The 110-residue stretch at Cys-32–Ser-141 folds into the CUB domain. An N-linked (GlcNAc...) asparagine glycan is attached at Asn-55. The 97-residue stretch at His-143–Phe-239 folds into the LCCL domain. A glycan (N-linked (GlcNAc...) asparagine) is linked at Asn-247. A helical membrane pass occupies residues Val-251 to Ile-271. Residues Cys-272–Leu-503 are Cytoplasmic-facing. Ser-305 is subject to Phosphoserine. Thr-406 is subject to Phosphothreonine. The tract at residues Gln-410–Leu-503 is disordered. Polar residues predominate over residues Leu-494–Leu-503.

The protein resides in the membrane. The chain is Discoidin, CUB and LCCL domain-containing protein 1 (Dcbld1) from Mus musculus (Mouse).